The following is a 100-amino-acid chain: MASHIICYIFCIIKLSCAHVCLMSFGSSYRVGVHITHEKVAACPRQNQRLYSCDSLRILYHYSCLTTRDLLYICDCSDFENIICLIRLLLNLDFVEVKLV.

Positions 1-18 (MASHIICYIFCIIKLSCA) are cleaved as a signal peptide. Disulfide bonds link Cys-21/Cys-84, Cys-43/Cys-64, and Cys-53/Cys-76.

This sequence belongs to the DEFL family.

It is found in the secreted. In Arabidopsis thaliana (Mouse-ear cress), this protein is Defensin-like protein 316.